The chain runs to 117 residues: Large ribosomal subunit protein uL18 (117 aa).

It belongs to the universal ribosomal protein uL18 family. Part of the 50S ribosomal subunit; part of the 5S rRNA/L5/L18/L25 subcomplex. Contacts the 5S and 23S rRNAs.

This is one of the proteins that bind and probably mediate the attachment of the 5S RNA into the large ribosomal subunit, where it forms part of the central protuberance. The polypeptide is Large ribosomal subunit protein uL18 (Photobacterium profundum (strain SS9)).